A 213-amino-acid polypeptide reads, in one-letter code: CASP-like protein 2A1 (213 aa).

Topologically, residues 1–41 (MSKMAEEKAAAVGGLGGAGAADAAQQQQLAAGEAAAARVRP) are cytoplasmic. Residues 42–62 (VETLLRAAPLGLCVAAMTVML) traverse the membrane as a helical segment. The Extracellular portion of the chain corresponds to 63–83 (RNQQSNEYGAVAYSDLGGFKY). Residues 84 to 104 (LVYANGLCAAYSLVSAFYTAV) traverse the membrane as a helical segment. Residues 105 to 113 (PRPATVSRS) lie on the Cytoplasmic side of the membrane. Residues 114 to 134 (WLVFLLDQVFTYLILAAGAAA) form a helical membrane-spanning segment. Over 135-166 (AELLYLAYNGDKEVTWSEACGVFGSFCRQART) the chain is Extracellular. A helical membrane pass occupies residues 167 to 187 (SVAITFGTVLCFILLSLISSY). At 188 to 213 (RLFSAYEAPPSSALGSKGVEIAAYPR) the chain is on the cytoplasmic side.

It belongs to the Casparian strip membrane proteins (CASP) family. Homodimer and heterodimers.

The protein localises to the cell membrane. In Zea mays (Maize), this protein is CASP-like protein 2A1.